The chain runs to 329 residues: Calponin-3 (329 aa).

Lysine 23 carries the post-translational modification N6-acetyllysine. Residues 26-130 (HQAEEDLRNW…TLVALAGLAK (105 aa)) form the Calponin-homology (CH) domain. An N6-methyllysine modification is found at lysine 158. 3 Calponin-like repeats span residues 164-189 (IGLQ…RHLY), 204-229 (ISLQ…RDIY), and 243-268 (ISLQ…RQVY). The disordered stretch occupies residues 279-329 (PVIHNGSQGTGTNGSEISDSDYQAEYPDEYHGEYQDDYPRDYQYSDQGIDY). Basic and acidic residues predominate over residues 306–318 (DEYHGEYQDDYPR). Serine 323 carries the post-translational modification Phosphoserine.

Belongs to the calponin family. Expressed in both non-smooth muscle tissues as well as smooth muscle tissues.

In terms of biological role, thin filament-associated protein that is implicated in the regulation and modulation of smooth muscle contraction. It is capable of binding to actin, calmodulin and tropomyosin. The interaction of calponin with actin inhibits the actomyosin Mg-ATPase activity. This chain is Calponin-3 (CNN3), found in Homo sapiens (Human).